A 787-amino-acid chain; its full sequence is DNA ligase (787 aa).

NAD(+) contacts are provided by residues 32–36, 81–82, and Glu121; these read DAEYD and SL. The N6-AMP-lysine intermediate role is filled by Lys123. NAD(+)-binding residues include Arg144, Glu181, Lys297, and Lys321. The Zn(2+) site is built by Cys415, Cys418, Cys445, and Cys451. The 85-residue stretch at 703 to 787 folds into the BRCT domain; the sequence is VEGLPLAGQT…RLTELGVAVD (85 aa).

This sequence belongs to the NAD-dependent DNA ligase family. LigA subfamily. Requires Mg(2+) as cofactor. It depends on Mn(2+) as a cofactor.

It carries out the reaction NAD(+) + (deoxyribonucleotide)n-3'-hydroxyl + 5'-phospho-(deoxyribonucleotide)m = (deoxyribonucleotide)n+m + AMP + beta-nicotinamide D-nucleotide.. Its function is as follows. DNA ligase that catalyzes the formation of phosphodiester linkages between 5'-phosphoryl and 3'-hydroxyl groups in double-stranded DNA using NAD as a coenzyme and as the energy source for the reaction. It is essential for DNA replication and repair of damaged DNA. The protein is DNA ligase of Pseudomonas syringae pv. tomato (strain ATCC BAA-871 / DC3000).